Consider the following 377-residue polypeptide: MERQNTAERRQGAREEGRPVAVRLQNVTKRFGDFTAVEDLSLDIHEGEFFSLLGPSGCGKTTTLRMIAGFEEPTEGEVVVAGRSMRGVPPYRRPVNTVFQSYALFPHLDVFENVAFGLRRAGVPKGEISRRVGEACALVKLSGFERRKPSRLSGGQQQRVALARALVNRPKVLLLDEPLGALDLKLRKQMQLELKNLQHEVGITFIYVTHDQEEALTMSDRIAVMNEGRVQQVADPATLYELPANRFVADFIGQTNILEGTVEAVEGERAVIRTAGGLRLEAVAPNGFRPAVGEAVEAAVRPEKLRVGEAGDNVVAAEVAEVVYLGSSTQYILRAPDGGRLVAHRQNDREAAALRPGEAVSVAWDARHCLILGGKRG.

The ABC transporter domain maps to 22–252 (VRLQNVTKRF…PANRFVADFI (231 aa)). 54–61 (GPSGCGKT) is an ATP binding site.

The protein belongs to the ABC transporter superfamily. Spermidine/putrescine importer (TC 3.A.1.11.1) family. In terms of assembly, the complex is composed of two ATP-binding proteins (PotA), two transmembrane proteins (PotB and PotC) and a solute-binding protein (PotD).

It is found in the cell membrane. The enzyme catalyses ATP + H2O + polyamine-[polyamine-binding protein]Side 1 = ADP + phosphate + polyamineSide 2 + [polyamine-binding protein]Side 1.. Functionally, part of the ABC transporter complex PotABCD involved in spermidine/putrescine import. Responsible for energy coupling to the transport system. The protein is Spermidine/putrescine import ATP-binding protein PotA of Rubrobacter xylanophilus (strain DSM 9941 / JCM 11954 / NBRC 16129 / PRD-1).